The sequence spans 175 residues: Electron transport protein HydN (175 aa).

4Fe-4S ferredoxin-type domains are found at residues 2–32, 48–79, 80–109, and 124–157; these read NRFIIADASKCIGCRTCEVACVVSHQENQDC, KGVNISTATVCRQCEDAPCANVCPNGAISRDK, GFVHVMQERCIGCKTCVVACPYGAMEVVVR, and DKAEANKCDLCNHREDGPACMAACPTHALICVDR. Positions 12, 15, 18, 22, 58, 61, 66, 70, 89, 92, 95, 99, 131, 134, 143, and 147 each coordinate [4Fe-4S] cluster.

It depends on [4Fe-4S] cluster as a cofactor.

In terms of biological role, electron transport from formate to hydrogen. The polypeptide is Electron transport protein HydN (hydN) (Escherichia coli O157:H7).